The primary structure comprises 355 residues: Putative transport protein PH1000 (355 aa).

8 consecutive transmembrane segments (helical) span residues 34–54 (VTWI…LPFF), 55–75 (SPLF…IKLK), 84–104 (AILL…ILVY), 158–178 (FSVP…YFFL), 212–232 (VWLL…LIFK), 240–260 (ILAG…GWMI), 274–294 (IIAG…LPDF), and 310–330 (VLVL…GLII).

This sequence belongs to the autoinducer-2 exporter (AI-2E) (TC 2.A.86) family.

The protein localises to the cell membrane. This is Putative transport protein PH1000 from Pyrococcus horikoshii (strain ATCC 700860 / DSM 12428 / JCM 9974 / NBRC 100139 / OT-3).